The chain runs to 416 residues: Calreticulin (416 aa).

An N-terminal signal peptide occupies residues 1–17 (MLLSVPLLLGLLGLAAA). The tract at residues 18 to 197 (DPAIYFKEQF…NSQVESGSLE (180 aa)) is N-domain. Q26 contacts Ca(2+). K48 bears the N6-acetyllysine mark. Ca(2+) is bound by residues K62 and K64. N6-(2-hydroxyisobutyryl)lysine is present on K64. A disulfide bridge links C105 with C137. Positions 109, 111, 128, and 135 each coordinate an alpha-D-glucoside. At K159 the chain carries N6-acetyllysine. The stretch at 191 to 202 (VESGSLEDDWDF) is one 1-1 repeat. Positions 191-255 (VESGSLEDDW…DAKKPEDWDE (65 aa)) are 4 X approximate repeats. Positions 193-277 (SGSLEDDWDF…NPEYKGEWKP (85 aa)) are disordered. Residues 198–308 (DDWDFLPPKK…YSPDANIYAY (111 aa)) are P-domain. Over residues 207-251 (KIKDPDAAKPEDWDERAKIDDPTDSKPEDWDKPEHIPDPDAKKPE) the composition is skewed to basic and acidic residues. K209 carries the post-translational modification N6-acetyllysine. 6 repeat units span residues 210 to 221 (DPDAAKPEDWDE), 227 to 238 (DPTDSKPEDWDK), 244 to 255 (DPDAKKPEDWDE), 259 to 269 (GEWEPPVIQNP), 273 to 283 (GEWKPRQIDNP), and 287 to 297 (GTWIHPEIDNP). The tract at residues 237 to 270 (DKPEHIPDPDAKKPEDWDEEMDGEWEPPVIQNPE) is interaction with PPIB. Positions 252–261 (DWDEEMDGEW) are enriched in acidic residues. Residues 259 to 297 (GEWEPPVIQNPEYKGEWKPRQIDNPDYKGTWIHPEIDNP) form a 3 X approximate repeats region. A C-domain region spans residues 309-416 (DSFAVLGLDL…ESPGQAKDEL (108 aa)). Residue D317 participates in an alpha-D-glucoside binding. D328 contributes to the Ca(2+) binding site. Positions 350–416 (TKAAEKQMKD…ESPGQAKDEL (67 aa)) are disordered. Residues 352–379 (AAEKQMKDKQDEEQRLKEEEEDKKRKEE) show a composition bias toward basic and acidic residues. The segment covering 380 to 408 (EEAEDKEDDDDRDEDEDEEDEKEEDEEES) has biased composition (acidic residues). Residues 413-416 (KDEL) carry the Prevents secretion from ER motif.

Belongs to the calreticulin family. As to quaternary structure, monomer. Interacts with GABARAP, NR3C1, PDIA3/ERp57 and TRIM21. Interacts (via P-domain) with PDIA5. Interacts with PPIB. Interacts with SPACA9. Component of an EIF2 complex at least composed of CELF1/CUGBP1, CALR, CALR3, EIF2S1, EIF2S2, HSP90B1 and HSPA5. Interacts with CLCC1.

The protein resides in the endoplasmic reticulum lumen. Its subcellular location is the cytoplasm. It is found in the cytosol. It localises to the cytolytic granule. The protein localises to the secreted. The protein resides in the extracellular space. Its subcellular location is the extracellular matrix. It is found in the cell surface. It localises to the sarcoplasmic reticulum lumen. The protein localises to the cytoplasmic vesicle. The protein resides in the secretory vesicle. Its subcellular location is the cortical granule. Functionally, calcium-binding chaperone that promotes folding, oligomeric assembly and quality control in the endoplasmic reticulum (ER) via the calreticulin/calnexin cycle. This lectin interacts transiently with almost all of the monoglucosylated glycoproteins that are synthesized in the ER. Interacts with the DNA-binding domain of NR3C1 and mediates its nuclear export. Involved in maternal gene expression regulation. May participate in oocyte maturation via the regulation of calcium homeostasis. Present in the cortical granules of non-activated oocytes, is exocytosed during the cortical reaction in response to oocyte activation and might participate in the block to polyspermy. This is Calreticulin (Calr) from Mus musculus (Mouse).